We begin with the raw amino-acid sequence, 355 residues long: Eukaryotic initiation factor 4A-13 (355 aa).

A Q motif motif is present at residues 40–68 (DSFDAMGLQENLLRGIYAYGFEKPSAIQQ). Residues 71-241 (IVPFCKGLDV…RKFMNQPVRI (171 aa)) form the Helicase ATP-binding domain. An ATP-binding site is contributed by 84–91 (AQSGTGKT). Positions 189–192 (DEAD) match the DEAD box motif. Positions 252 to 355 (GIKQFYVNVD…QQVSLVINYD (104 aa)) constitute a Helicase C-terminal domain.

The protein belongs to the DEAD box helicase family. eIF4A subfamily. EIF4F is a multi-subunit complex, the composition of which varies with external and internal environmental conditions. It is composed of at least EIF4A, EIF4E and EIF4G.

It catalyses the reaction ATP + H2O = ADP + phosphate + H(+). Its function is as follows. ATP-dependent RNA helicase which is a subunit of the eIF4F complex involved in cap recognition and is required for mRNA binding to ribosome. In the current model of translation initiation, eIF4A unwinds RNA secondary structures in the 5'-UTR of mRNAs which is necessary to allow efficient binding of the small ribosomal subunit, and subsequent scanning for the initiator codon. In Nicotiana tabacum (Common tobacco), this protein is Eukaryotic initiation factor 4A-13.